The chain runs to 342 residues: Arrestin domain-containing protein 5 (342 aa).

Belongs to the arrestin family. In terms of tissue distribution, testis-enriched.

It is found in the membrane. Its function is as follows. Plays an essential role in spermatogenesis. May be involved in the anchoring of the sperm head to the tail during spermatogenesis by affecting SEC22A-mediated SUN5 and NDC1 transport and localization. This Homo sapiens (Human) protein is Arrestin domain-containing protein 5 (ARRDC5).